A 934-amino-acid chain; its full sequence is Bifunctional uridylyltransferase/uridylyl-removing enzyme (934 aa).

Residues 1–379 are uridylyltransferase; it reads MSAHDLKLEE…TFSRRKRKLS (379 aa). The tract at residues 380–736 is uridylyl-removing; sequence DDGAFISENH…AKPHAFEAVT (357 aa). Residues 496–613 enclose the HD domain; that stretch reads VDEHLLRCIA…IDFADTVQTM (118 aa). ACT domains lie at 737-818 and 848-931; these read EITV…DMLA and VIEV…RSPQ.

This sequence belongs to the GlnD family. It depends on Mg(2+) as a cofactor.

It catalyses the reaction [protein-PII]-L-tyrosine + UTP = [protein-PII]-uridylyl-L-tyrosine + diphosphate. It carries out the reaction [protein-PII]-uridylyl-L-tyrosine + H2O = [protein-PII]-L-tyrosine + UMP + H(+). Its activity is regulated as follows. Uridylyltransferase (UTase) activity is inhibited by glutamine, while glutamine activates uridylyl-removing (UR) activity. Its function is as follows. Modifies, by uridylylation and deuridylylation, the PII regulatory proteins (GlnB and homologs), in response to the nitrogen status of the cell that GlnD senses through the glutamine level. Under low glutamine levels, catalyzes the conversion of the PII proteins and UTP to PII-UMP and PPi, while under higher glutamine levels, GlnD hydrolyzes PII-UMP to PII and UMP (deuridylylation). Thus, controls uridylylation state and activity of the PII proteins, and plays an important role in the regulation of nitrogen assimilation and metabolism. The protein is Bifunctional uridylyltransferase/uridylyl-removing enzyme of Brucella abortus (strain S19).